A 490-amino-acid chain; its full sequence is Glutamate--tRNA ligase (490 aa).

The short motif at Pro9–Gly19 is the 'HIGH' region element. The 'KMSKS' region signature appears at Lys251–Arg255. ATP is bound at residue Lys254.

Belongs to the class-I aminoacyl-tRNA synthetase family. Glutamate--tRNA ligase type 1 subfamily. Monomer.

Its subcellular location is the cytoplasm. It carries out the reaction tRNA(Glu) + L-glutamate + ATP = L-glutamyl-tRNA(Glu) + AMP + diphosphate. In terms of biological role, catalyzes the attachment of glutamate to tRNA(Glu) in a two-step reaction: glutamate is first activated by ATP to form Glu-AMP and then transferred to the acceptor end of tRNA(Glu). The sequence is that of Glutamate--tRNA ligase from Borreliella afzelii (strain PKo) (Borrelia afzelii).